A 397-amino-acid chain; its full sequence is MERFKKASSIIETLKQQGHEAYFVGGSVRDLIIDRPIGDIDIATSALPEEVMAIFPRNVPVGLEHGTVIVLENGEPYEVTTFRTESEYEDFRRPSSVQFVRSLEEDLKRRDFTMNAIAMTEEGEMVDLFAGQEAIQQREIVTVGNAADRFQEDALRMMRGIRFVSALGFSLETKTKQAIETYGHLLEHIAIERITVEFEKLLTGTYCVKGLKELVETKLFSHLPYLQMSEERLLKATQYKWDSFETDIEAWAFFLYCIGEEHPSVFLRQWKFSNKKIKDIVAVLLAIRTRKEKDWDTVLLYKTGIYIAEMAERVYEAMIESYNPTSVKRVQSMFHALPIQGRQEMNVTGNDLLNWANKKPGPWVADMLQKIEEAIVKGNVVNEKERIREWLQGCNLL.

ATP-binding residues include glycine 26 and arginine 29. Positions 26 and 29 each coordinate CTP. The Mg(2+) site is built by aspartate 39 and aspartate 41. Arginine 110, aspartate 153, arginine 156, arginine 159, and arginine 162 together coordinate ATP. CTP contacts are provided by arginine 110, aspartate 153, arginine 156, arginine 159, and arginine 162.

This sequence belongs to the tRNA nucleotidyltransferase/poly(A) polymerase family. Bacterial CCA-adding enzyme type 3 subfamily. Homodimer. It depends on Mg(2+) as a cofactor.

The enzyme catalyses a tRNA precursor + 2 CTP + ATP = a tRNA with a 3' CCA end + 3 diphosphate. It catalyses the reaction a tRNA with a 3' CCA end + 2 CTP + ATP = a tRNA with a 3' CCACCA end + 3 diphosphate. In terms of biological role, catalyzes the addition and repair of the essential 3'-terminal CCA sequence in tRNAs without using a nucleic acid template. Adds these three nucleotides in the order of C, C, and A to the tRNA nucleotide-73, using CTP and ATP as substrates and producing inorganic pyrophosphate. tRNA 3'-terminal CCA addition is required both for tRNA processing and repair. Also involved in tRNA surveillance by mediating tandem CCA addition to generate a CCACCA at the 3' terminus of unstable tRNAs. While stable tRNAs receive only 3'-terminal CCA, unstable tRNAs are marked with CCACCA and rapidly degraded. The protein is CCA-adding enzyme of Bacillus cereus (strain G9842).